The sequence spans 296 residues: Formylmethanofuran--tetrahydromethanopterin formyltransferase-like protein (296 aa).

Belongs to the FTR family.

This is Formylmethanofuran--tetrahydromethanopterin formyltransferase-like protein (ehaS) from Methanothermobacter marburgensis (strain ATCC BAA-927 / DSM 2133 / JCM 14651 / NBRC 100331 / OCM 82 / Marburg) (Methanobacterium thermoautotrophicum).